The primary structure comprises 154 residues: 6,7-dimethyl-8-ribityllumazine synthase (154 aa).

5-amino-6-(D-ribitylamino)uracil contacts are provided by residues phenylalanine 26, 60 to 62 (ALE), and 84 to 86 (CII). 89 to 90 (ET) contributes to the (2S)-2-hydroxy-3-oxobutyl phosphate binding site. Catalysis depends on histidine 92, which acts as the Proton donor. Asparagine 117 serves as a coordination point for 5-amino-6-(D-ribitylamino)uracil. Arginine 131 lines the (2S)-2-hydroxy-3-oxobutyl phosphate pocket.

Belongs to the DMRL synthase family.

It catalyses the reaction (2S)-2-hydroxy-3-oxobutyl phosphate + 5-amino-6-(D-ribitylamino)uracil = 6,7-dimethyl-8-(1-D-ribityl)lumazine + phosphate + 2 H2O + H(+). Its pathway is cofactor biosynthesis; riboflavin biosynthesis; riboflavin from 2-hydroxy-3-oxobutyl phosphate and 5-amino-6-(D-ribitylamino)uracil: step 1/2. In terms of biological role, catalyzes the formation of 6,7-dimethyl-8-ribityllumazine by condensation of 5-amino-6-(D-ribitylamino)uracil with 3,4-dihydroxy-2-butanone 4-phosphate. This is the penultimate step in the biosynthesis of riboflavin. The protein is 6,7-dimethyl-8-ribityllumazine synthase of Leptothrix cholodnii (strain ATCC 51168 / LMG 8142 / SP-6) (Leptothrix discophora (strain SP-6)).